The chain runs to 354 residues: N-acetyl-gamma-glutamyl-phosphate reductase (354 aa).

The active site involves Cys-156.

It belongs to the NAGSA dehydrogenase family. Type 1 subfamily.

It is found in the cytoplasm. The enzyme catalyses N-acetyl-L-glutamate 5-semialdehyde + phosphate + NADP(+) = N-acetyl-L-glutamyl 5-phosphate + NADPH + H(+). It participates in amino-acid biosynthesis; L-arginine biosynthesis; N(2)-acetyl-L-ornithine from L-glutamate: step 3/4. Catalyzes the NADPH-dependent reduction of N-acetyl-5-glutamyl phosphate to yield N-acetyl-L-glutamate 5-semialdehyde. This chain is N-acetyl-gamma-glutamyl-phosphate reductase, found in Bordetella bronchiseptica (strain ATCC BAA-588 / NCTC 13252 / RB50) (Alcaligenes bronchisepticus).